A 320-amino-acid polypeptide reads, in one-letter code: L-lactate dehydrogenase 2 (320 aa).

NAD(+) is bound by residues 18–19 (AV), Asp40, and Arg45. Residues Gln88, Arg94, and 126-129 (NPVD) contribute to the substrate site. Residues 124–126 (ITN) and Ser149 contribute to the NAD(+) site. 154–157 (DSAR) contacts substrate. Residues Arg159 and 171-176 (KNVHAY) contribute to the beta-D-fructose 1,6-bisphosphate site. The Proton acceptor role is filled by His181. Phosphotyrosine is present on Tyr228. Residue Thr237 participates in substrate binding.

The protein belongs to the LDH/MDH superfamily. LDH family. In terms of assembly, homotetramer.

The protein localises to the cytoplasm. It catalyses the reaction (S)-lactate + NAD(+) = pyruvate + NADH + H(+). The protein operates within fermentation; pyruvate fermentation to lactate; (S)-lactate from pyruvate: step 1/1. Allosterically activated by fructose 1,6-bisphosphate (FBP). Its function is as follows. Catalyzes the conversion of lactate to pyruvate. The protein is L-lactate dehydrogenase 2 of Bifidobacterium longum subsp. longum (strain ATCC 15707 / DSM 20219 / JCM 1217 / NCTC 11818 / E194b).